Here is a 464-residue protein sequence, read N- to C-terminus: MDFCFMIFYNSLSGQKEQFKPIEANKIKMYACGVTVYDDCHIGHARTYIAFDVINRYFKYRGYDVTLVRNITDIDDKIIKRANENGESTTELVERNIKAMHDVFARLNILKPSKEPRATETIPEMVAMIETLIKKGYAYQGANSDVFYRVTKFADYGKLSKQNLEALQQGSRVDVVEEKENPMDFVLWKMAKEGEPAWDSPWGAGRPGWHIECSAMSKKLLGDTFDIHAGGSDLRFPHHENEIAQSEACNECTFANYWLHSGMVKVNAEKMSKSLNNFFTIVEVLEEYHPEVVRYFLASTVYRSEINYSKENLENAKASVERLFNALRDIEPIEVNLPDDASEYEEKFIKAMDNDFNTPEALAVLFSLAKEINTLKTTNKYKASGYAYLLRKLCDVLGILFTDIEEYFKQGDGADASEIEKLIAERTQAKKDKNYVRADEIRNQLQQQGIILEDSATGTTWKKG.

Position 32 (Cys-32) interacts with Zn(2+). The 'HIGH' region motif lies at 34–44 (VTVYDDCHIGH). Zn(2+) is bound by residues Cys-213, His-238, and Glu-242. The short motif at 270 to 274 (KMSKS) is the 'KMSKS' region element. Lys-273 lines the ATP pocket.

The protein belongs to the class-I aminoacyl-tRNA synthetase family. As to quaternary structure, monomer. The cofactor is Zn(2+).

The protein localises to the cytoplasm. The enzyme catalyses tRNA(Cys) + L-cysteine + ATP = L-cysteinyl-tRNA(Cys) + AMP + diphosphate. The sequence is that of Cysteine--tRNA ligase from Francisella tularensis subsp. tularensis (strain SCHU S4 / Schu 4).